A 270-amino-acid polypeptide reads, in one-letter code: MSNTSNSDPNSDIPFASSNVTLPSYNQNPRRKRTKLTNNEVGSSSSSPRPKPVTQPDPDASQIARPCTECGKQFGSLKALFGHMRCHPERQWRGINPPSNFKRRINSNAASSSSSWDPSEEEHNIASCLLMMANGDVPTRSSEVEERFECDGCKKVFGSHQALGGHRATHKDVKGCFANKNITEDPPPPPPQEIVDQDKGKSVKLVSGMNHRCNICSRVFSSGQALGGHMRCHWEKDQEENQVRGIDLNVPAATSSDTTLGCSLDLRLGL.

2 stretches are compositionally biased toward polar residues: residues 1–28 and 36–48; these read MSNT…YNQN and LTNN…SSSP. A disordered region spans residues 1-64; that stretch reads MSNTSNSDPN…QPDPDASQIA (64 aa). Residues 65-87 form a C2H2-type 1 zinc finger; sequence RPCTECGKQFGSLKALFGHMRCH. A disordered region spans residues 95-119; sequence INPPSNFKRRINSNAASSSSSWDPS. Residues 106-115 are compositionally biased toward low complexity; that stretch reads NSNAASSSSS. 2 C2H2-type zinc fingers span residues 148 to 170 and 211 to 233; these read FECD…RATH and HRCN…MRCH.

Interacts (via the EAR motif) with TPL. In terms of tissue distribution, expressed exclusively in pollen.

The protein resides in the nucleus. Mediates the regulation of male germ cell division by DUO1. The sequence is that of Zinc finger protein ZAT2 from Arabidopsis thaliana (Mouse-ear cress).